A 285-amino-acid chain; its full sequence is Biotin synthase (285 aa).

The 222-residue stretch at 2-223 (STRKQIFLCA…RRAHTLLGED (222 aa)) folds into the Radical SAM core domain. The [4Fe-4S] cluster site is built by Cys-20, Cys-24, and Cys-27. Cys-64, Cys-99, and Cys-157 together coordinate [2Fe-2S] cluster.

It belongs to the radical SAM superfamily. Biotin synthase family. As to quaternary structure, homodimer. [4Fe-4S] cluster is required as a cofactor. [2Fe-2S] cluster serves as cofactor.

It carries out the reaction (4R,5S)-dethiobiotin + (sulfur carrier)-SH + 2 reduced [2Fe-2S]-[ferredoxin] + 2 S-adenosyl-L-methionine = (sulfur carrier)-H + biotin + 2 5'-deoxyadenosine + 2 L-methionine + 2 oxidized [2Fe-2S]-[ferredoxin]. It participates in cofactor biosynthesis; biotin biosynthesis; biotin from 7,8-diaminononanoate: step 2/2. Functionally, catalyzes the conversion of dethiobiotin (DTB) to biotin by the insertion of a sulfur atom into dethiobiotin via a radical-based mechanism. This is Biotin synthase from Sulfurovum sp. (strain NBC37-1).